We begin with the raw amino-acid sequence, 132 residues long: Holo-[acyl-carrier-protein] synthase (132 aa).

Mg(2+) contacts are provided by Asp8 and Glu64.

Belongs to the P-Pant transferase superfamily. AcpS family. Mg(2+) serves as cofactor.

It localises to the cytoplasm. It catalyses the reaction apo-[ACP] + CoA = holo-[ACP] + adenosine 3',5'-bisphosphate + H(+). Transfers the 4'-phosphopantetheine moiety from coenzyme A to a Ser of acyl-carrier-protein. The protein is Holo-[acyl-carrier-protein] synthase of Shewanella woodyi (strain ATCC 51908 / MS32).